A 472-amino-acid polypeptide reads, in one-letter code: Homeobox protein PKNOX2 (472 aa).

A disordered region spans residues 1-62 (MMQHASPAPA…STPVPSAPID (62 aa)). Over residues 26-38 (DSPQMTATAQPPS) the composition is skewed to polar residues. Residues 46 to 56 (SAPSAAASTPV) are compositionally biased toward low complexity. Residues 96–179 (GSECITSASF…MHSDNLLRND (84 aa)) enclose the MEIS N-terminal domain. Positions 291–350 (KRGVLPKHATNIMRSWLFQHLMHPYPTEDEKRQIAAQTNLTLLQVNNWFINARRRILQPM) form a DNA-binding region, homeobox. Disordered regions lie at residues 351-371 (LDASNPDPAPKAKKIKSQHRP), 386-405 (QQQGGAPGTNPDGSINLDNL), and 422-472 (MAAH…DSLE). Basic residues predominate over residues 361–371 (KAKKIKSQHRP). A compositionally biased stretch (acidic residues) spans 429–454 (LDGTEEEDEDEMEEEEEEELEEEVDE).

This sequence belongs to the TALE/MEIS homeobox family.

It is found in the nucleus. This is Homeobox protein PKNOX2 (PKNOX2) from Homo sapiens (Human).